We begin with the raw amino-acid sequence, 273 residues long: (5R)-carbapenem-3-carboxylate synthase (273 aa).

Residues His101 and Asp103 each contribute to the Fe cation site. Gly104 is a substrate binding site. Thr130 provides a ligand contact to 2-oxoglutarate. His251 contributes to the Fe cation binding site. Residues Arg253, Arg263, and Arg267 each coordinate 2-oxoglutarate.

Belongs to the TfdA dioxygenase family. Homohexamer. Dimer of trimers. It depends on Fe(2+) as a cofactor.

It localises to the cytoplasm. The catalysed reaction is (3S,5S)-carbapenam-3-caboxylate + 2-oxoglutarate + O2 = (5R)-carbapenem-3-carboxylate + succinate + CO2 + H2O. Its activity is regulated as follows. Inhibited by L-N-acetylproline and by D-N-acetylproline. Functionally, catalyzes the Fe(2+) and alpha-ketoglutarate-dependent conversion of (3S,5S)-carbapenam to (5R)-carbapenem, an essential step in carbapenem antibiotic biosynthesis. The polypeptide is (5R)-carbapenem-3-carboxylate synthase (carC) (Pectobacterium carotovorum subsp. carotovorum (Erwinia carotovora subsp. carotovora)).